The primary structure comprises 624 residues: FAD-dependent monooxygenase apdD (624 aa).

Glu73 and Asp359 together coordinate FAD.

The protein belongs to the paxM FAD-dependent monooxygenase family. The cofactor is FAD.

It participates in secondary metabolite biosynthesis. FAD-dependent monooxygenase; part of the gene cluster that mediates the biosynthesis of aspyridones. The polyketide-amino acid backbone preaspyridone A is first assembled by the PKS-NRPS hybrid apdA. The assembly of preaspyridone A is initiated by loading of malonyl-CoA onto apdA, followed by decarboxylation to yield the acetyl starter unit. The growing polyketide chain then elongates into a tetraketide. The adpA PKS module catalyzes three Claisen condensations, as well as beta-keto processing and methylation. Alpha-methylation step during polyketide synthesis is a prerequisite and a key checkpoint for chain transfer between PKS and NRPS modules. The downstream NRPS module contains the condensation (C), adenylation (A), and thiolation (T) domains and catalyzes the incorporation of tyrosine via the formation of the L-tyrosinyl-thioester and the amide linkage between L-tyrosinyl-thioester and the tetraketide. The bimodular assembly line is terminated with a reductase (R) domain that facilitates formation and release of the tetramic acid product. Because apdA lacks a designated enoylreductase (ER) domain, the required activity is provided the enoyl reductase apdC. ApdC appears to operate with different stereoselectivity in different PKS cycle. Combined with apdC, apdA is proposed to synthesize preaspyridone A via about 20 enzymatic steps. A number of oxidative steps performed successively by the cytochrome P450 monooxygenases apdE and apdB are required for the conversion of preaspyridone A to aspyridone A. The cytochrome P450 monooxygenase apdE is responsible for the oxidative dephenylation of preaspyridone A. Finally, the predicted FAD-dependent monooxygenase apdD and the acyl-CoA dehydrogenase apdG may be involved in the transformation of aspyridone A into aspyridone B. This Emericella nidulans (strain FGSC A4 / ATCC 38163 / CBS 112.46 / NRRL 194 / M139) (Aspergillus nidulans) protein is FAD-dependent monooxygenase apdD.